The primary structure comprises 352 residues: UDP-N-acetylglucosamine--N-acetylmuramyl-(pentapeptide) pyrophosphoryl-undecaprenol N-acetylglucosamine transferase (352 aa).

Positions 195 and 287 each coordinate UDP-N-acetyl-alpha-D-glucosamine.

The protein belongs to the glycosyltransferase 28 family. MurG subfamily.

The protein localises to the cell membrane. It catalyses the reaction Mur2Ac(oyl-L-Ala-gamma-D-Glu-L-Lys-D-Ala-D-Ala)-di-trans,octa-cis-undecaprenyl diphosphate + UDP-N-acetyl-alpha-D-glucosamine = beta-D-GlcNAc-(1-&gt;4)-Mur2Ac(oyl-L-Ala-gamma-D-Glu-L-Lys-D-Ala-D-Ala)-di-trans,octa-cis-undecaprenyl diphosphate + UDP + H(+). The protein operates within cell wall biogenesis; peptidoglycan biosynthesis. In terms of biological role, cell wall formation. Catalyzes the transfer of a GlcNAc subunit on undecaprenyl-pyrophosphoryl-MurNAc-pentapeptide (lipid intermediate I) to form undecaprenyl-pyrophosphoryl-MurNAc-(pentapeptide)GlcNAc (lipid intermediate II). This Streptococcus pneumoniae (strain CGSP14) protein is UDP-N-acetylglucosamine--N-acetylmuramyl-(pentapeptide) pyrophosphoryl-undecaprenol N-acetylglucosamine transferase.